A 399-amino-acid chain; its full sequence is tRNA-specific 2-thiouridylase MnmA (399 aa).

Residues 7-14 (AMSGGVDS) and methionine 33 contribute to the ATP site. Catalysis depends on cysteine 128, which acts as the Nucleophile. An intrachain disulfide couples cysteine 128 to cysteine 224. An ATP-binding site is contributed by glycine 152. The segment at 174-176 (KDQ) is interaction with tRNA. Cysteine 224 serves as the catalytic Cysteine persulfide intermediate. Residues 333-334 (RY) form an interaction with tRNA region.

Belongs to the MnmA/TRMU family.

It localises to the cytoplasm. It carries out the reaction S-sulfanyl-L-cysteinyl-[protein] + uridine(34) in tRNA + AH2 + ATP = 2-thiouridine(34) in tRNA + L-cysteinyl-[protein] + A + AMP + diphosphate + H(+). Its function is as follows. Catalyzes the 2-thiolation of uridine at the wobble position (U34) of tRNA, leading to the formation of s(2)U34. This Rhodopirellula baltica (strain DSM 10527 / NCIMB 13988 / SH1) protein is tRNA-specific 2-thiouridylase MnmA.